The sequence spans 809 residues: Sucrose synthase 3 (809 aa).

The segment at 277 to 755 (MVFNVVILSP…GLQRIYERYT (479 aa)) is GT-B glycosyltransferase.

Belongs to the glycosyltransferase 1 family. Plant sucrose synthase subfamily. Detected in the whole plant with highest expression in developing siliques, vasculature of cotyledons and stomatal guard cells. Also detected throughout the mature parts of the root but not in the expanding zone.

It catalyses the reaction an NDP-alpha-D-glucose + D-fructose = a ribonucleoside 5'-diphosphate + sucrose + H(+). Functionally, sucrose-cleaving enzyme that provides UDP-glucose and fructose for various metabolic pathways. Modulates metabolic homeostasis and direct carbon towards starch synthesis in developing seeds. This Arabidopsis thaliana (Mouse-ear cress) protein is Sucrose synthase 3 (SUS3).